Consider the following 374-residue polypeptide: Pectate lyase 1 (374 aa).

The first 22 residues, 1 to 22 (MKYLLPSAAAGLLLLAAQPTMA), serve as a signal peptide directing secretion. A disulfide bridge links Cys93 with Cys176. Asp150, Asp152, Glu187, and Asp191 together coordinate Ca(2+). Arg239 is a catalytic residue. A disulfide bridge links Cys350 with Cys373.

The protein belongs to the polysaccharide lyase 1 family. PLADES subfamily. The cofactor is Ca(2+).

Its subcellular location is the secreted. The enzyme catalyses Eliminative cleavage of (1-&gt;4)-alpha-D-galacturonan to give oligosaccharides with 4-deoxy-alpha-D-galact-4-enuronosyl groups at their non-reducing ends.. It functions in the pathway glycan metabolism; pectin degradation; 2-dehydro-3-deoxy-D-gluconate from pectin: step 2/5. Its function is as follows. Involved in maceration and soft-rotting of plant tissue. This is Pectate lyase 1 (pel1) from Pectobacterium atrosepticum (strain SCRI 1043 / ATCC BAA-672) (Erwinia carotovora subsp. atroseptica).